The sequence spans 127 residues: DNA-directed RNA polymerase subunit omega (127 aa).

Belongs to the RNA polymerase subunit omega family. As to quaternary structure, the RNAP catalytic core consists of 2 alpha, 1 beta, 1 beta' and 1 omega subunit. When a sigma factor is associated with the core the holoenzyme is formed, which can initiate transcription.

It catalyses the reaction RNA(n) + a ribonucleoside 5'-triphosphate = RNA(n+1) + diphosphate. Its function is as follows. Promotes RNA polymerase assembly. Latches the N- and C-terminal regions of the beta' subunit thereby facilitating its interaction with the beta and alpha subunits. The chain is DNA-directed RNA polymerase subunit omega from Rickettsia peacockii (strain Rustic).